We begin with the raw amino-acid sequence, 158 residues long: Ribosomal RNA large subunit methyltransferase H (158 aa).

Residues Leu-72, Gly-103, and 122 to 127 each bind S-adenosyl-L-methionine; that span reads LGNLTL.

It belongs to the RNA methyltransferase RlmH family. Homodimer.

Its subcellular location is the cytoplasm. The catalysed reaction is pseudouridine(1915) in 23S rRNA + S-adenosyl-L-methionine = N(3)-methylpseudouridine(1915) in 23S rRNA + S-adenosyl-L-homocysteine + H(+). Its function is as follows. Specifically methylates the pseudouridine at position 1915 (m3Psi1915) in 23S rRNA. This is Ribosomal RNA large subunit methyltransferase H from Acidiphilium cryptum (strain JF-5).